The chain runs to 216 residues: MSKVSRDTLYEAVREVQAGSISKRRKFLETVELQISLKNYDPQKDKRFSGTVRLKTTPRPKFSVCVLGDQQHCDEAKAAEIPHMDIEALKKLNKNKKMVKKLAKKYDAFLASESLIKQIPRILGPGLNKAGKFPSLLTHNENLNTKVDEVKSTIKFQMKKVLCLAVAVGHVRMSEDELVYNIHLAVNFLVSLLKKNWQNVRALYIKSSMGKPQRLY.

Belongs to the universal ribosomal protein uL1 family. In terms of assembly, component of the large ribosomal subunit.

Its subcellular location is the cytoplasm. In terms of biological role, component of the large ribosomal subunit. The ribosome is a large ribonucleoprotein complex responsible for the synthesis of proteins in the cell. The sequence is that of Large ribosomal subunit protein uL1 (rpl10a) from Ictalurus punctatus (Channel catfish).